The chain runs to 358 residues: Na(+)/H(+) exchange regulatory cofactor NHE-RF1 (358 aa).

Ser2 carries the N-acetylserine modification. 2 positions are modified to phosphoserine: Ser2 and Ser46. A PDZ 1 domain is found at 14–94; the sequence is LCCLEKGPNG…AVRLLVVDPE (81 aa). The segment covering 114-132 has biased composition (low complexity); it reads QEAPGQAEPPAAAEVQGAG. Residues 114–192 form a disordered region; the sequence is QEAPGQAEPP…DPDSPAEASG (79 aa). Basic and acidic residues predominate over residues 135–152; the sequence is NEPREADKSHPEQRELRP. One can recognise a PDZ 2 domain in the interval 154 to 234; the sequence is LCTMKKGPSG…ETKLLVVDRE (81 aa). A phosphoserine mark is found at Ser162, Ser269, Ser280, Ser290, and Ser291. The segment at 277–358 is disordered; it reads ALESPRPALV…SKKNELFSNL (82 aa). The span at 288-306 shows a compositional bias: polar residues; it reads SASSDTSEELNSQDSPPKQ. Thr293 carries the post-translational modification Phosphothreonine. Phosphoserine occurs at positions 294, 299, and 302. Residues 307 to 319 show a composition bias toward low complexity; sequence DSTAPSSTSSSDP. Over residues 348–358 the composition is skewed to basic and acidic residues; sequence WSKKNELFSNL.

As to quaternary structure, homodimer, and heterodimer with NHERF2. Binds the N-termini of EZR, RDX and MSN. Binds the C-termini of PDGFRA, PDGFRB, ADRB2, NOS2 and CFTR. Binds ARHGAP17, EPI64, RACK1, OPRK1, GNAQ, CTNNB1 and PLCB3. Binds PDZK1. Interacts with CLCN3. Binds the C-terminus of PAG1. In resting T-cells, part of a PAG1-NHERF1-MSN complex which is disrupted upon TCR activation. Forms a complex with CFTR and SLC4A7. Forms a complex with SLC4A7 and ATP6V1B1. Interacts with TRPC4 (via the PDZ-binding domain). Directly interacts with HTR4. Interacts (via the PDZ 1 domain) with PODXL (via the C-terminal PDZ-binding motif DTHL); interaction is not detected in glomerular epithelium cells. Interacts (via the PDZ 1 domain) with PODXL (via the C-terminal PDZ-binding motif DTHL); the interaction take place early in the secretory pathway and is necessary for its apical membrane sorting. Interacts with SLC26A3. Interacts with MCC. Interacts with SLC34A1. Interacts (via the PDZ domains) with SLC26A6 isoform 4 and isoform 5. Interacts (via PDZ domains) with ACE2 (via PDZ-binding motif); the interaction may enhance ACE2 membrane residence. Phosphorylated on serine residues. In terms of tissue distribution, detected in liver, kidney, pancreas, prostate, spleen, small intestine and placenta, in particular in the syncytiotrophoblast.

The protein resides in the cytoplasm. It localises to the apical cell membrane. It is found in the endomembrane system. Its subcellular location is the cell projection. The protein localises to the filopodium. The protein resides in the ruffle. It localises to the microvillus. Its function is as follows. Scaffold protein that connects plasma membrane proteins with members of the ezrin/moesin/radixin family and thereby helps to link them to the actin cytoskeleton and to regulate their surface expression. Necessary for recycling of internalized ADRB2. Was first known to play a role in the regulation of the activity and subcellular location of SLC9A3. Necessary for cAMP-mediated phosphorylation and inhibition of SLC9A3. May enhance Wnt signaling. May participate in HTR4 targeting to microvilli. Involved in the regulation of phosphate reabsorption in the renal proximal tubules. Involved in sperm capacitation. May participate in the regulation of the chloride and bicarbonate homeostasis in spermatozoa. The sequence is that of Na(+)/H(+) exchange regulatory cofactor NHE-RF1 from Homo sapiens (Human).